The following is a 535-amino-acid chain: T-complex protein 1 subunit zeta (535 aa).

The protein belongs to the TCP-1 chaperonin family. As to quaternary structure, heterooligomeric complex of about 850 to 900 kDa that forms two stacked rings, 12 to 16 nm in diameter.

Its subcellular location is the cytoplasm. Its function is as follows. Molecular chaperone; assists the folding of proteins upon ATP hydrolysis. Known to play a role, in vitro, in the folding of actin and tubulin. The polypeptide is T-complex protein 1 subunit zeta (cct6) (Schizosaccharomyces pombe (strain 972 / ATCC 24843) (Fission yeast)).